The following is a 441-amino-acid chain: Homogentisate 1,2-dioxygenase (441 aa).

Catalysis depends on histidine 297, which acts as the Proton acceptor. 2 residues coordinate Fe cation: histidine 340 and glutamate 346. Positions 355 and 376 each coordinate homogentisate. Histidine 376 contacts Fe cation.

This sequence belongs to the homogentisate dioxygenase family. Hexamer; dimer of trimers. Requires Fe cation as cofactor.

It carries out the reaction homogentisate + O2 = 4-maleylacetoacetate + H(+). Its pathway is amino-acid degradation; L-phenylalanine degradation; acetoacetate and fumarate from L-phenylalanine: step 4/6. Involved in the catabolism of homogentisate (2,5-dihydroxyphenylacetate or 2,5-OH-PhAc), a central intermediate in the degradation of phenylalanine and tyrosine. Catalyzes the oxidative ring cleavage of the aromatic ring of homogentisate to yield maleylacetoacetate. The polypeptide is Homogentisate 1,2-dioxygenase (Streptomyces coelicolor (strain ATCC BAA-471 / A3(2) / M145)).